The following is a 704-amino-acid chain: Ion-translocating oxidoreductase complex subunit C (704 aa).

2 4Fe-4S ferredoxin-type domains span residues 368-397 (MGAP…QQLY) and 407-436 (KATA…VQYF). Positions 377, 380, 383, 387, 416, 419, 422, and 426 each coordinate [4Fe-4S] cluster. The segment at 536-684 (RAKQAAHPMA…PADPRKAAVA (149 aa)) is disordered. Positions 556–565 (KAAVEAAIAR) are enriched in low complexity.

Belongs to the 4Fe4S bacterial-type ferredoxin family. RnfC subfamily. In terms of assembly, the complex is composed of six subunits: RsxA, RsxB, RsxC, RsxD, RsxE and RsxG. [4Fe-4S] cluster is required as a cofactor.

The protein resides in the cell inner membrane. Part of a membrane-bound complex that couples electron transfer with translocation of ions across the membrane. Required to maintain the reduced state of SoxR. The sequence is that of Ion-translocating oxidoreductase complex subunit C from Salmonella choleraesuis (strain SC-B67).